A 110-amino-acid polypeptide reads, in one-letter code: Hydrogenase maturation factor HypA (110 aa).

Position 2 (histidine 2) interacts with Ni(2+). 4 residues coordinate Zn(2+): cysteine 70, cysteine 73, cysteine 86, and cysteine 89.

This sequence belongs to the HypA/HybF family.

Its function is as follows. Involved in the maturation of [NiFe] hydrogenases. Required for nickel insertion into the metal center of the hydrogenase. This Geotalea uraniireducens (strain Rf4) (Geobacter uraniireducens) protein is Hydrogenase maturation factor HypA.